Consider the following 385-residue polypeptide: Leucine aminopeptidase 1 (385 aa).

Positions 1–19 (MKFPNLLSLGVAASTTVLA) are cleaved as a signal peptide. A propeptide spanning residues 20–87 (AVPNQKPIGD…FPRTFAQTTV (68 aa)) is cleaved from the precursor. An N-linked (GlcNAc...) asparagine glycan is attached at Asn-177. Residues His-185, Asp-204, Glu-243, and Asp-270 each coordinate Zn(2+). Cys-319 and Cys-323 are disulfide-bonded. His-352 contributes to the Zn(2+) binding site.

Belongs to the peptidase M28 family. M28E subfamily. Monomer. Requires Zn(2+) as cofactor.

Its subcellular location is the secreted. Functionally, extracellular aminopeptidase that allows assimilation of proteinaceous substrates. The protein is Leucine aminopeptidase 1 (LAP1) of Ajellomyces capsulatus (strain H88) (Darling's disease fungus).